A 139-amino-acid chain; its full sequence is Drosulfakinins (139 aa).

An N-terminal signal peptide occupies residues 1-35; sequence MGHRGMGCAHFATMAMPLWALTFYLLVVLPVPSQT. A propeptide spanning residues 36-71 is cleaved from the precursor; sequence ASVEVGKEERRLQDLDPKMGSEAGNTDGLSLARFGS. Phe-80 carries the post-translational modification Phenylalanine amide. Residues 81–109 constitute a propeptide that is removed on maturation; it reads GHRVPIISRPVIPIELDLLMDNEDDRTMS. At Tyr-115 the chain carries Sulfotyrosine. Phe-120 carries the post-translational modification Phenylalanine amide. Tyr-132 carries the post-translational modification Sulfotyrosine. Position 137 is a phenylalanine amide (Phe-137).

The protein belongs to the gastrin/cholecystokinin family.

Its subcellular location is the secreted. Its function is as follows. Drosulfakinin-0 (DSK 0) plays diverse biological roles including regulating gut muscle contraction in adults but not in larvae. The protein is Drosulfakinins of Drosophila pseudoobscura pseudoobscura (Fruit fly).